We begin with the raw amino-acid sequence, 161 residues long: Endoribonuclease YbeY (161 aa).

Residues His121, His125, and His131 each coordinate Zn(2+).

The protein belongs to the endoribonuclease YbeY family. Zn(2+) serves as cofactor.

The protein localises to the cytoplasm. In terms of biological role, single strand-specific metallo-endoribonuclease involved in late-stage 70S ribosome quality control and in maturation of the 3' terminus of the 16S rRNA. The sequence is that of Endoribonuclease YbeY from Stenotrophomonas maltophilia (strain K279a).